A 249-amino-acid chain; its full sequence is NADH dehydrogenase [ubiquinone] flavoprotein 2, mitochondrial (249 aa).

A mitochondrion-targeting transit peptide spans 1–32; the sequence is MFLSAALRARAAGLAAHWGKHIRNLHKTAVQN. Position 61 is an N6-acetyllysine (Lys-61). [2Fe-2S] cluster-binding residues include Cys-135, Cys-140, Cys-176, and Cys-180. Tyr-193 is modified (phosphotyrosine; by SRC). Residues 213–249 are disordered; it reads IPKPGPRSGRFSCEPAGGLTSLTEPPKGPGFGVQAGL.

The protein belongs to the complex I 24 kDa subunit family. Core subunit of respiratory chain NADH dehydrogenase (Complex I) which is composed of 45 different subunits. This is a component of the flavoprotein-sulfur (FP) fragment of the enzyme. Requires [2Fe-2S] cluster as cofactor.

Its subcellular location is the mitochondrion inner membrane. It carries out the reaction a ubiquinone + NADH + 5 H(+)(in) = a ubiquinol + NAD(+) + 4 H(+)(out). Functionally, core subunit of the mitochondrial membrane respiratory chain NADH dehydrogenase (Complex I) which catalyzes electron transfer from NADH through the respiratory chain, using ubiquinone as an electron acceptor. Parts of the peripheral arm of the enzyme, where the electrons from NADH are accepted by flavin mononucleotide (FMN) and then passed along a chain of iron-sulfur clusters by electron tunnelling to the final acceptor ubiquinone. Contains one iron-sulfur cluster. This is NADH dehydrogenase [ubiquinone] flavoprotein 2, mitochondrial (NDUFV2) from Bos taurus (Bovine).